Reading from the N-terminus, the 455-residue chain is Nucleoside-triphosphatase (455 aa).

Catalysis depends on glutamate 168, which acts as the Proton acceptor.

Belongs to the GDA1/CD39 NTPase family.

Its subcellular location is the nucleus. It catalyses the reaction a ribonucleoside 5'-triphosphate + H2O = a ribonucleoside 5'-diphosphate + phosphate + H(+). Its function is as follows. Might be involved in RNA transport out of nuclei. The polypeptide is Nucleoside-triphosphatase (Pisum sativum (Garden pea)).